The sequence spans 340 residues: Thylakoidal processing peptidase 1, chloroplastic (340 aa).

Residues 1 to 52 (MAIRITFTYSTHVARNLVGTRVGPGGYCFESLVRPRFFSHKRDFDRSPRNRP) constitute a chloroplast transit peptide. Residues 155 to 175 (EDAKAAFTAVTVSILFRSALA) traverse the membrane as a helical segment. Residues 176 to 340 (EPKSIPSTSM…AITRGPVAVS (165 aa)) are Lumenal, thylakoid-facing. Ser-184 is an active-site residue.

It belongs to the peptidase S26 family.

The protein localises to the plastid. It is found in the chloroplast thylakoid membrane. It catalyses the reaction Cleavage of hydrophobic, N-terminal signal or leader sequences from secreted and periplasmic proteins.. In terms of biological role, cleaves the thylakoid-transfer domain from a chloroplast protein. The polypeptide is Thylakoidal processing peptidase 1, chloroplastic (TPP1) (Arabidopsis thaliana (Mouse-ear cress)).